The chain runs to 341 residues: Holliday junction branch migration complex subunit RuvB (341 aa).

The tract at residues 1–21 (MSQPDPMLRPEPLESDGEDRA) is disordered. Residues 4–183 (PDPMLRPEPL…FGIPTRLQFY (180 aa)) are large ATPase domain (RuvB-L). Residues Leu22, Arg23, Gly64, Lys67, Thr68, Thr69, 130 to 132 (EDF), Arg173, Tyr183, and Arg220 contribute to the ATP site. Position 68 (Thr68) interacts with Mg(2+). The small ATPAse domain (RuvB-S) stretch occupies residues 184–254 (TIEELDLIVT…IADSALTRLG (71 aa)). The interval 257–341 (HLGLDTADRR…PRTQESLFDE (85 aa)) is head domain (RuvB-H). Residues Arg293, Arg312, and Arg317 each contribute to the DNA site.

This sequence belongs to the RuvB family. In terms of assembly, homohexamer. Forms an RuvA(8)-RuvB(12)-Holliday junction (HJ) complex. HJ DNA is sandwiched between 2 RuvA tetramers; dsDNA enters through RuvA and exits via RuvB. An RuvB hexamer assembles on each DNA strand where it exits the tetramer. Each RuvB hexamer is contacted by two RuvA subunits (via domain III) on 2 adjacent RuvB subunits; this complex drives branch migration. In the full resolvosome a probable DNA-RuvA(4)-RuvB(12)-RuvC(2) complex forms which resolves the HJ.

The protein localises to the cytoplasm. It catalyses the reaction ATP + H2O = ADP + phosphate + H(+). Functionally, the RuvA-RuvB-RuvC complex processes Holliday junction (HJ) DNA during genetic recombination and DNA repair, while the RuvA-RuvB complex plays an important role in the rescue of blocked DNA replication forks via replication fork reversal (RFR). RuvA specifically binds to HJ cruciform DNA, conferring on it an open structure. The RuvB hexamer acts as an ATP-dependent pump, pulling dsDNA into and through the RuvAB complex. RuvB forms 2 homohexamers on either side of HJ DNA bound by 1 or 2 RuvA tetramers; 4 subunits per hexamer contact DNA at a time. Coordinated motions by a converter formed by DNA-disengaged RuvB subunits stimulates ATP hydrolysis and nucleotide exchange. Immobilization of the converter enables RuvB to convert the ATP-contained energy into a lever motion, pulling 2 nucleotides of DNA out of the RuvA tetramer per ATP hydrolyzed, thus driving DNA branch migration. The RuvB motors rotate together with the DNA substrate, which together with the progressing nucleotide cycle form the mechanistic basis for DNA recombination by continuous HJ branch migration. Branch migration allows RuvC to scan DNA until it finds its consensus sequence, where it cleaves and resolves cruciform DNA. This chain is Holliday junction branch migration complex subunit RuvB, found in Paracoccus denitrificans (strain Pd 1222).